Reading from the N-terminus, the 208-residue chain is Small ribosomal subunit protein uS4 (208 aa).

Residues 98 to 161 form the S4 RNA-binding domain; the sequence is RRLDNVIYRM…KELEIIKESL (64 aa).

It belongs to the universal ribosomal protein uS4 family. In terms of assembly, part of the 30S ribosomal subunit. Contacts protein S5. The interaction surface between S4 and S5 is involved in control of translational fidelity.

Functionally, one of the primary rRNA binding proteins, it binds directly to 16S rRNA where it nucleates assembly of the body of the 30S subunit. In terms of biological role, with S5 and S12 plays an important role in translational accuracy. The polypeptide is Small ribosomal subunit protein uS4 (Thermodesulfovibrio yellowstonii (strain ATCC 51303 / DSM 11347 / YP87)).